The sequence spans 342 residues: Phomopsin biosynthesis cluster protein B (342 aa).

The tract at residues 1 to 22 is disordered; that stretch reads MESIAKAKSLPNKGRTYDSQRP. The helical transmembrane segment at 87 to 107 threads the bilayer; it reads VLIIGCAVISLFAIIGALGFA. A disordered region spans residues 118–186; sequence CASPAHQNPH…QCGESPDEAQ (69 aa). Over residues 144-155 the composition is skewed to low complexity; the sequence is HSGSHSSSSSTN. Residue N248 is glycosylated (N-linked (GlcNAc...) asparagine).

Its subcellular location is the membrane. In terms of biological role, part of the gene cluster that mediates the biosynthesis of the phomopsins, a group of hexapeptide mycotoxins which infects lupins and causes lupinosis disease in livestock. The role of phomB within the phomopsins biosynthesis pathway has still to be determined. The pathway starts with the processing of the precursor phomA by several endopeptidases including kexin proteases as well as the cluster-specific S41 family peptidase phomP1 and the oligopeptidase phomG to produce 10 identical copies of the hexapeptide Tyr-Val-Ile-Pro-Ile-Asp. After being excised from the precursor peptide, the core peptides are cyclized and modified post-translationally by enzymes encoded within the gene cluster. The timing and order of proteolysis of the phomA precursor and PTMs are still unknown. Two tyrosinase-like enzymes, phomQ1 and phomQ2, catalyze the chlorination and hydroxylation of Tyr, respectively. PhomYb, is proposed to be involved in the construction of the macrocyclic structure. The other 4 ustYa family proteins may be involved in PTMs that generate the unique structure of phomopsin A. PhomYa is required for the hydroxylation of C-beta of Tyr. PhomYc, phomYd, and phomYe are responsible for the biosynthesis of 2,3-dehydroisoleucine (dIle), 2,3-dehydroaspartic acid (dAsp), and 3,4-dehydroproline (dPro), respectively. While dIle formation by phomYc is indispensable for the installation of dAsp by phomYd, the order of the other PTMs have not been elucidated yet. Most of the biosynthetic enzymes likely have broad substrate specificity, and thus, there might be a metabolic grid from a precursor to phomopsin A. The enzyme(s) responsible for the biosynthesis of 3,4-dehydrovaline (dVal) have also not been identified yet. Finally, phomM acts as an S-adenosylmethionine-dependent alpha-N-methyltransferase that catalyzes two successive N-methylation reactions, converting N-desmethyl-phomopsin A to phomopsin A and phomopsin A further to an N,N-dimethylated congener called phomopsin E. In Diaporthe leptostromiformis (Lupinosis disease fungus), this protein is Phomopsin biosynthesis cluster protein B.